The primary structure comprises 145 residues: MAGSRKVAREFTLQGIYAWMIGGADVTLIAANLKEDEQFKRADEAYFRTLLYGVLKEEDMLSSRIAPLLDRAVAELSPIERSILLIGAYELLHCPDVPWRVAINESVELAKKFGGTDGHKYINGVLDKLAQDVRAVEIEHAKKRD.

Belongs to the NusB family.

In terms of biological role, involved in transcription antitermination. Required for transcription of ribosomal RNA (rRNA) genes. Binds specifically to the boxA antiterminator sequence of the ribosomal RNA (rrn) operons. The polypeptide is Transcription antitermination protein NusB (Thiobacillus denitrificans (strain ATCC 25259 / T1)).